Consider the following 271-residue polypeptide: MFDWLLEPLQFEFMQNALLTALIVSIICALLSCYLVLKGWSLMGDAISHAVLPGIVLAYLAGIPLAIGAFFSGIFCSLGVGYLKENSRIKEDTAMGIVFSGMFAIGLVMFTKIQTEEHLTHILFGNVLGVSHQELIQSAVISAIIFCLIVFKRKDFLLYCFDPSHARVAGLSPKILHYGLLILLALTIVSTMQVVGVILVVAMLIAPGITALTLTKSFDKMLWVAIASSIASSLIGVILSYHFDASTGACIILLQAAFFVIALAYSKIRIR.

A run of 8 helical transmembrane segments spans residues 17-37, 55-75, 93-113, 131-151, 168-188, 194-214, 221-241, and 245-265; these read ALLT…YLVL, IVLA…SGIF, TAMG…FTKI, SHQE…LIVF, VAGL…ALTI, VVGV…ALTL, MLWV…ILSY, and ASTG…ALAY.

This sequence belongs to the ABC-3 integral membrane protein family.

It is found in the cell inner membrane. Part of an ATP-driven transport system HI_0359/HI_0360/HI_0361/HI_0362 for iron. This Haemophilus influenzae (strain ATCC 51907 / DSM 11121 / KW20 / Rd) protein is Probable iron transport system membrane protein HI_0359.